We begin with the raw amino-acid sequence, 345 residues long: MEFSKLIEILNNGDSGLIDHNLSSNPEINSAASLEKAEVNQISFIENASYLFNEINQTKASALILGEKVDITEKLDLKNIAWVTVKNPRIAFAEILEEINPTKVFPESIHPSAVIGNNVKIGKNIYIGANVCIDSNTRIGDNSIIHSGVVIYENVVIGKNNELHANCVIHQYSNLGDNCIINSNAVIGSEGFGFIPTKRGWRKMPQTGKVILGDNVEIGSCSTVDRPAVGDTVIGSGTKIDNLVQVGHGVQIGNHCAMASQVGIAGGAKIGDGVILAGQVGVGNRVKVGSNVIASSKCGIHTDIEPEQVVSGFPAIPNKLWLRCAANFKKLPELAKVIKKLNGSV.

The active-site Proton acceptor is His-248.

This sequence belongs to the transferase hexapeptide repeat family. LpxD subfamily. In terms of assembly, homotrimer.

It catalyses the reaction a UDP-3-O-[(3R)-3-hydroxyacyl]-alpha-D-glucosamine + a (3R)-hydroxyacyl-[ACP] = a UDP-2-N,3-O-bis[(3R)-3-hydroxyacyl]-alpha-D-glucosamine + holo-[ACP] + H(+). Its pathway is bacterial outer membrane biogenesis; LPS lipid A biosynthesis. Its function is as follows. Catalyzes the N-acylation of UDP-3-O-acylglucosamine using 3-hydroxyacyl-ACP as the acyl donor. Is involved in the biosynthesis of lipid A, a phosphorylated glycolipid that anchors the lipopolysaccharide to the outer membrane of the cell. The protein is UDP-3-O-acylglucosamine N-acyltransferase of Prochlorococcus marinus (strain SARG / CCMP1375 / SS120).